The chain runs to 198 residues: Transcription factor IND (198 aa).

Residues 1 to 33 are disordered; sequence MENGMYKKKGVCDSCVSSKSRSNHSPKRSMMEP. The bHLH domain occupies 118 to 167; the sequence is ISDDPQTVVARRRRERISEKIRILKRIVPGGAKMDTASMLDEAIRYTKFL.

As to quaternary structure, homodimer. Heterodimer; possibly with ALC. As to expression, after fertilization, it is expressed in stripes about four cells wide at the margins of developing wild-type fruit. Also expressed in the inner valve layer, which becomes lignified later in fruit development. Detected in roots.

Its subcellular location is the nucleus. In terms of biological role, transcription regulator required for seed dispersal. Involved in the differentiation of all three cell types required for fruit dehiscence. Acts as the key regulator in a network including SHP and ALC that controls specification of the valve margin. Works with ALC, SHP, and FUL to allow differentiation of the lignified valve layer, the spring-loaded mechanism of fruit that promotes opening. Regulates the expression of the YJ80 marker. This is Transcription factor IND (IND) from Arabidopsis thaliana (Mouse-ear cress).